A 201-amino-acid polypeptide reads, in one-letter code: 3-isopropylmalate dehydratase small subunit (201 aa).

This sequence belongs to the LeuD family. LeuD type 1 subfamily. In terms of assembly, heterodimer of LeuC and LeuD.

The enzyme catalyses (2R,3S)-3-isopropylmalate = (2S)-2-isopropylmalate. It functions in the pathway amino-acid biosynthesis; L-leucine biosynthesis; L-leucine from 3-methyl-2-oxobutanoate: step 2/4. Catalyzes the isomerization between 2-isopropylmalate and 3-isopropylmalate, via the formation of 2-isopropylmaleate. This is 3-isopropylmalate dehydratase small subunit from Shigella dysenteriae serotype 1 (strain Sd197).